Reading from the N-terminus, the 269-residue chain is Energy-coupling factor transporter ATP-binding protein EcfA1 (269 aa).

Positions 8–242 (IVFKNVSFQY…AEELTRIGLD (235 aa)) constitute an ABC transporter domain. An ATP-binding site is contributed by 42–49 (GHNGSGKS).

Belongs to the ABC transporter superfamily. Energy-coupling factor EcfA family. As to quaternary structure, forms a stable energy-coupling factor (ECF) transporter complex composed of 2 membrane-embedded substrate-binding proteins (S component), 2 ATP-binding proteins (A component) and 2 transmembrane proteins (T component).

It localises to the cell membrane. Functionally, ATP-binding (A) component of a common energy-coupling factor (ECF) ABC-transporter complex. Unlike classic ABC transporters this ECF transporter provides the energy necessary to transport a number of different substrates. The sequence is that of Energy-coupling factor transporter ATP-binding protein EcfA1 from Staphylococcus aureus (strain USA300).